Reading from the N-terminus, the 84-residue chain is RNA-binding protein Hfq (84 aa).

One can recognise a Sm domain in the interval 9–68 (DPYLNTLRKERVPVSIYLVNGIKLQGQIESFDQFVILLKNTVSQMVYKHAISTVVPSRPV).

The protein belongs to the Hfq family. Homohexamer.

Its function is as follows. RNA chaperone that binds small regulatory RNA (sRNAs) and mRNAs to facilitate mRNA translational regulation in response to envelope stress, environmental stress and changes in metabolite concentrations. Also binds with high specificity to tRNAs. The protein is RNA-binding protein Hfq of Azotobacter vinelandii (strain DJ / ATCC BAA-1303).